We begin with the raw amino-acid sequence, 312 residues long: Lipoyl synthase (312 aa).

Positions 1 to 10 (MNEAPAEKQK) are enriched in basic and acidic residues. Residues 1–20 (MNEAPAEKQKPQQGKRFSER) are disordered. Positions 51, 56, 62, 77, 81, 84, and 290 each coordinate [4Fe-4S] cluster. A Radical SAM core domain is found at 63 to 280 (WSRKTATYLA…RSVGESLGLF (218 aa)).

Belongs to the radical SAM superfamily. Lipoyl synthase family. [4Fe-4S] cluster serves as cofactor.

Its subcellular location is the cytoplasm. It catalyses the reaction [[Fe-S] cluster scaffold protein carrying a second [4Fe-4S](2+) cluster] + N(6)-octanoyl-L-lysyl-[protein] + 2 oxidized [2Fe-2S]-[ferredoxin] + 2 S-adenosyl-L-methionine + 4 H(+) = [[Fe-S] cluster scaffold protein] + N(6)-[(R)-dihydrolipoyl]-L-lysyl-[protein] + 4 Fe(3+) + 2 hydrogen sulfide + 2 5'-deoxyadenosine + 2 L-methionine + 2 reduced [2Fe-2S]-[ferredoxin]. It functions in the pathway protein modification; protein lipoylation via endogenous pathway; protein N(6)-(lipoyl)lysine from octanoyl-[acyl-carrier-protein]: step 2/2. Functionally, catalyzes the radical-mediated insertion of two sulfur atoms into the C-6 and C-8 positions of the octanoyl moiety bound to the lipoyl domains of lipoate-dependent enzymes, thereby converting the octanoylated domains into lipoylated derivatives. This is Lipoyl synthase from Chlamydia felis (strain Fe/C-56) (Chlamydophila felis).